The primary structure comprises 131 residues: Small ribosomal subunit protein uS8 (131 aa).

The protein belongs to the universal ribosomal protein uS8 family. Part of the 30S ribosomal subunit. Contacts proteins S5 and S12.

Functionally, one of the primary rRNA binding proteins, it binds directly to 16S rRNA central domain where it helps coordinate assembly of the platform of the 30S subunit. In Desulforudis audaxviator (strain MP104C), this protein is Small ribosomal subunit protein uS8.